The sequence spans 145 residues: D-aminoacyl-tRNA deacylase (145 aa).

Positions 137–138 (GP) match the Gly-cisPro motif, important for rejection of L-amino acids motif.

This sequence belongs to the DTD family. Homodimer.

The protein localises to the cytoplasm. It catalyses the reaction glycyl-tRNA(Ala) + H2O = tRNA(Ala) + glycine + H(+). The enzyme catalyses a D-aminoacyl-tRNA + H2O = a tRNA + a D-alpha-amino acid + H(+). In terms of biological role, an aminoacyl-tRNA editing enzyme that deacylates mischarged D-aminoacyl-tRNAs. Also deacylates mischarged glycyl-tRNA(Ala), protecting cells against glycine mischarging by AlaRS. Acts via tRNA-based rather than protein-based catalysis; rejects L-amino acids rather than detecting D-amino acids in the active site. By recycling D-aminoacyl-tRNA to D-amino acids and free tRNA molecules, this enzyme counteracts the toxicity associated with the formation of D-aminoacyl-tRNA entities in vivo and helps enforce protein L-homochirality. The sequence is that of D-aminoacyl-tRNA deacylase from Salmonella paratyphi A (strain AKU_12601).